Reading from the N-terminus, the 122-residue chain is Large ribosomal subunit protein uL22 (122 aa).

Residues 103–122 (VEGKEMKSSKSHKKNQAEGK) form a disordered region.

It belongs to the universal ribosomal protein uL22 family. In terms of assembly, part of the 50S ribosomal subunit.

In terms of biological role, this protein binds specifically to 23S rRNA; its binding is stimulated by other ribosomal proteins, e.g. L4, L17, and L20. It is important during the early stages of 50S assembly. It makes multiple contacts with different domains of the 23S rRNA in the assembled 50S subunit and ribosome. Functionally, the globular domain of the protein is located near the polypeptide exit tunnel on the outside of the subunit, while an extended beta-hairpin is found that lines the wall of the exit tunnel in the center of the 70S ribosome. The chain is Large ribosomal subunit protein uL22 from Helicobacter pylori (strain P12).